A 250-amino-acid polypeptide reads, in one-letter code: 5-oxoprolinase subunit A (250 aa).

Belongs to the LamB/PxpA family. As to quaternary structure, forms a complex composed of PxpA, PxpB and PxpC.

It catalyses the reaction 5-oxo-L-proline + ATP + 2 H2O = L-glutamate + ADP + phosphate + H(+). Functionally, catalyzes the cleavage of 5-oxoproline to form L-glutamate coupled to the hydrolysis of ATP to ADP and inorganic phosphate. The protein is 5-oxoprolinase subunit A of Thermus thermophilus (strain ATCC 27634 / DSM 579 / HB8).